The following is a 162-amino-acid chain: HTH-type transcriptional regulator IscR (162 aa).

An HTH rrf2-type domain is found at 2–131 (RLTSKGRYAV…NNITLGELVN (130 aa)). The H-T-H motif DNA-binding region spans 28–51 (LADISERQGISLSYLEQLFSRLRK). [2Fe-2S] cluster contacts are provided by C92, C98, and C104. A disordered region spans residues 141-162 (RQHNEAHRPTRAQDAIDVKLRA).

[2Fe-2S] cluster is required as a cofactor.

Regulates the transcription of several operons and genes involved in the biogenesis of Fe-S clusters and Fe-S-containing proteins. This is HTH-type transcriptional regulator IscR from Cronobacter sakazakii (strain ATCC BAA-894) (Enterobacter sakazakii).